The following is a 259-amino-acid chain: Triosephosphate isomerase (259 aa).

10–12 (NWK) serves as a coordination point for substrate. H102 serves as the catalytic Electrophile. E174 (proton acceptor) is an active-site residue. Substrate is bound by residues G180, S220, and 241–242 (GG).

This sequence belongs to the triosephosphate isomerase family. As to quaternary structure, homodimer.

The protein localises to the cytoplasm. The enzyme catalyses D-glyceraldehyde 3-phosphate = dihydroxyacetone phosphate. The protein operates within carbohydrate biosynthesis; gluconeogenesis. Its pathway is carbohydrate degradation; glycolysis; D-glyceraldehyde 3-phosphate from glycerone phosphate: step 1/1. Functionally, involved in the gluconeogenesis. Catalyzes stereospecifically the conversion of dihydroxyacetone phosphate (DHAP) to D-glyceraldehyde-3-phosphate (G3P). The protein is Triosephosphate isomerase of Cutibacterium acnes (strain DSM 16379 / KPA171202) (Propionibacterium acnes).